Reading from the N-terminus, the 796-residue chain is MSDKIQEEILGLVSRSNFKQCYAKLGQLQKQFPNALYFKILETYVKFKQSPGKFDYNKLLEEPYGLKGTTITGDTRSLEFLHNFFVELGKYDEALHVYERGNFKFPSYELSYHWFMKALEDSNYNQMSKASLQLAKYSDSGNLPKRAYYFWNAISILAVSRFQENTLSDPKKILLSRLARQSLLDLKPFQNVQEIIVYCLVLDELFPQSREISEEIVAITFANFDTSVNLYLKNFILKHTKLLNSPQKLFEVCSKLIEKGLDDYELITNLIDAAYKLSKSKDEVKQWIDENLGDSRNTRLARLKLDIMYTDSVSESSLSYYLSKYHNKPCCSIDLNHYSGHINIDMLKSIMSKYDPEDKDLIHHCNILELGLIGSDSINNYNKFKGTLEKKSVTDYSSCSTFLLEIVKDKCKKTNPELKDVLLCITILENYQAKDPHNFDTMCWLIVLYMYLGLVPDAYFHFINLKIKNVQTDSLDYMIFSRFSTLFPNKQSDFYSKTFHEHNNLYDTSLANLPRYIQVAFERNSYSKILGMLEMRDKLMKSYTRWTKTLENLQFSRLCNDKRGHLLQKLHEDWRSLEMTQSVSFSDNRDFSILDENFAQFLNRGKILEYANLNEESIFLTLIRELIIEALPNGEKTEQISALLKKLPSINLEELLNNNLTEVESASFLIFFEIYENNGKNLHDLISRLMKVPINAKQNWMVSHTYLTKMATLKTLDSLKRIKDKEIQKLIKNSLKELRSCCDDVFKGYSKALVQAYEELKKDECGNLLKELDVKAENVKNIKNSLLGIQKSVRNL.

Serine 2 carries the N-acetylserine modification.

The protein belongs to the MDM20/NAA25 family. As to quaternary structure, component of the N-terminal acetyltransferase B (NatB) complex, which is composed of NAT3 and MDM20.

It is found in the cytoplasm. In terms of biological role, non-catalytic subunit of the NatB N-terminal acetyltransferase, which catalyzes acetylation of the amino-terminal methionine residues of all proteins beginning with Met-Asp or Met-Glu and of some proteins beginning with Met-Asn or Met-Met. NatB acetylates TPM1 protein and regulates tropomyocin-actin interactions. MDM20 is required for mitochondrial inheritance during budding and together with TPM1, is essential for the integrity and assembly of actin cables. Genetically interacts with CIN8. This is N-terminal acetyltransferase B complex subunit MDM20 (MDM20) from Saccharomyces cerevisiae (strain ATCC 204508 / S288c) (Baker's yeast).